A 162-amino-acid chain; its full sequence is Transcription elongation factor GreA (162 aa).

The stretch at 50 to 75 (YHAAREEQGHLESRIRQLQELLRTAK) forms a coiled coil.

It belongs to the GreA/GreB family.

Functionally, necessary for efficient RNA polymerase transcription elongation past template-encoded arresting sites. The arresting sites in DNA have the property of trapping a certain fraction of elongating RNA polymerases that pass through, resulting in locked ternary complexes. Cleavage of the nascent transcript by cleavage factors such as GreA or GreB allows the resumption of elongation from the new 3'terminus. GreA releases sequences of 2 to 3 nucleotides. The protein is Transcription elongation factor GreA of Saccharopolyspora erythraea (strain ATCC 11635 / DSM 40517 / JCM 4748 / NBRC 13426 / NCIMB 8594 / NRRL 2338).